We begin with the raw amino-acid sequence, 262 residues long: Ribosomal RNA small subunit methyltransferase A (262 aa).

Asn-13, Leu-15, Gly-40, Glu-61, Asp-85, and Asn-104 together coordinate S-adenosyl-L-methionine.

This sequence belongs to the class I-like SAM-binding methyltransferase superfamily. rRNA adenine N(6)-methyltransferase family. RsmA subfamily.

The protein localises to the cytoplasm. The enzyme catalyses adenosine(1518)/adenosine(1519) in 16S rRNA + 4 S-adenosyl-L-methionine = N(6)-dimethyladenosine(1518)/N(6)-dimethyladenosine(1519) in 16S rRNA + 4 S-adenosyl-L-homocysteine + 4 H(+). Its function is as follows. Specifically dimethylates two adjacent adenosines (A1518 and A1519) in the loop of a conserved hairpin near the 3'-end of 16S rRNA in the 30S particle. May play a critical role in biogenesis of 30S subunits. The protein is Ribosomal RNA small subunit methyltransferase A of Chromobacterium violaceum (strain ATCC 12472 / DSM 30191 / JCM 1249 / CCUG 213 / NBRC 12614 / NCIMB 9131 / NCTC 9757 / MK).